The primary structure comprises 299 residues: 4-diphosphocytidyl-2-C-methyl-D-erythritol kinase (299 aa).

The active site involves K19. Position 110–120 (110–120) interacts with ATP; that stretch reads PVASGIGGGSA. The active site involves D152.

The protein belongs to the GHMP kinase family. IspE subfamily.

The enzyme catalyses 4-CDP-2-C-methyl-D-erythritol + ATP = 4-CDP-2-C-methyl-D-erythritol 2-phosphate + ADP + H(+). It participates in isoprenoid biosynthesis; isopentenyl diphosphate biosynthesis via DXP pathway; isopentenyl diphosphate from 1-deoxy-D-xylulose 5-phosphate: step 3/6. In terms of biological role, catalyzes the phosphorylation of the position 2 hydroxy group of 4-diphosphocytidyl-2C-methyl-D-erythritol. This Agrobacterium fabrum (strain C58 / ATCC 33970) (Agrobacterium tumefaciens (strain C58)) protein is 4-diphosphocytidyl-2-C-methyl-D-erythritol kinase.